Consider the following 1361-residue polypeptide: DNA-directed RNA polymerase subunit beta (1361 aa).

This sequence belongs to the RNA polymerase beta chain family. The RNAP catalytic core consists of 2 alpha, 1 beta, 1 beta' and 1 omega subunit. When a sigma factor is associated with the core the holoenzyme is formed, which can initiate transcription.

The catalysed reaction is RNA(n) + a ribonucleoside 5'-triphosphate = RNA(n+1) + diphosphate. DNA-dependent RNA polymerase catalyzes the transcription of DNA into RNA using the four ribonucleoside triphosphates as substrates. This Saccharophagus degradans (strain 2-40 / ATCC 43961 / DSM 17024) protein is DNA-directed RNA polymerase subunit beta.